Consider the following 377-residue polypeptide: Chaperone protein DnaJ (377 aa).

The J domain maps to 5–70 (DYYEILGVSK…EKRSAYDQYG (66 aa)). The segment at 131-209 (GVVREICVPT…CRGSGRIERT (79 aa)) adopts a CR-type zinc-finger fold. Residues C144, C147, C161, C164, C183, C186, C197, and C200 each coordinate Zn(2+). CXXCXGXG motif repeat units lie at residues 144-151 (CLQCRGSG), 161-168 (CVTCHGHG), 183-190 (CPSCNGHG), and 197-204 (CNKCRGSG).

It belongs to the DnaJ family. As to quaternary structure, homodimer. It depends on Zn(2+) as a cofactor.

The protein localises to the cytoplasm. Participates actively in the response to hyperosmotic and heat shock by preventing the aggregation of stress-denatured proteins and by disaggregating proteins, also in an autonomous, DnaK-independent fashion. Unfolded proteins bind initially to DnaJ; upon interaction with the DnaJ-bound protein, DnaK hydrolyzes its bound ATP, resulting in the formation of a stable complex. GrpE releases ADP from DnaK; ATP binding to DnaK triggers the release of the substrate protein, thus completing the reaction cycle. Several rounds of ATP-dependent interactions between DnaJ, DnaK and GrpE are required for fully efficient folding. Also involved, together with DnaK and GrpE, in the DNA replication of plasmids through activation of initiation proteins. The protein is Chaperone protein DnaJ of Blochmanniella floridana.